We begin with the raw amino-acid sequence, 469 residues long: Acetyl-CoA decarbonylase/synthase complex subunit beta 2 (469 aa).

Residues cysteine 187, cysteine 190, cysteine 276, and cysteine 278 each coordinate [Ni-Fe-S] cluster.

It belongs to the CdhC family. Monomer. The ACDS complex is made up of alpha, epsilon, beta, gamma and delta chains with a probable stoichiometry of (alpha(2)epsilon(2))(4)-beta(8)-(gamma(1)delta(1))(8) (Potential). [Ni-Fe-S] cluster is required as a cofactor.

The catalysed reaction is Co(I)-[corrinoid Fe-S protein] + acetyl-CoA + H(+) = methyl-Co(III)-[corrinoid Fe-S protein] + CO + CoA. Part of a complex that catalyzes the reversible cleavage of acetyl-CoA, allowing autotrophic growth from CO(2). The alpha-epsilon complex generates CO from CO(2), while the beta subunit (this protein) combines the CO with CoA and a methyl group to form acetyl-CoA. The methyl group, which is incorporated into acetyl-CoA, is transferred to the beta subunit by a corrinoid iron-sulfur protein (the gamma-delta complex). The protein is Acetyl-CoA decarbonylase/synthase complex subunit beta 2 (cdhC2) of Methanocaldococcus jannaschii (strain ATCC 43067 / DSM 2661 / JAL-1 / JCM 10045 / NBRC 100440) (Methanococcus jannaschii).